The chain runs to 293 residues: Acetyl-coenzyme A carboxylase carboxyl transferase subunit beta (293 aa).

The region spanning 29 to 293 is the CoA carboxyltransferase N-terminal domain; it reads LWRKCPRCEG…MGWPPLALDD (265 aa). Positions 33, 36, 52, and 55 each coordinate Zn(2+). The C4-type zinc-finger motif lies at 33–55; sequence CPRCEGVVYRPELDRNMDVCPKC.

Belongs to the AccD/PCCB family. In terms of assembly, acetyl-CoA carboxylase is a heterohexamer composed of biotin carboxyl carrier protein (AccB), biotin carboxylase (AccC) and two subunits each of ACCase subunit alpha (AccA) and ACCase subunit beta (AccD). Zn(2+) serves as cofactor.

The protein resides in the cytoplasm. It carries out the reaction N(6)-carboxybiotinyl-L-lysyl-[protein] + acetyl-CoA = N(6)-biotinyl-L-lysyl-[protein] + malonyl-CoA. Its pathway is lipid metabolism; malonyl-CoA biosynthesis; malonyl-CoA from acetyl-CoA: step 1/1. Component of the acetyl coenzyme A carboxylase (ACC) complex. Biotin carboxylase (BC) catalyzes the carboxylation of biotin on its carrier protein (BCCP) and then the CO(2) group is transferred by the transcarboxylase to acetyl-CoA to form malonyl-CoA. The chain is Acetyl-coenzyme A carboxylase carboxyl transferase subunit beta from Alcanivorax borkumensis (strain ATCC 700651 / DSM 11573 / NCIMB 13689 / SK2).